The primary structure comprises 193 residues: Holliday junction branch migration complex subunit RuvA (193 aa).

The tract at residues 1–64 is domain I; sequence MIGRIAGILL…EDAHLLYGFL (64 aa). Residues 65-139 form a domain II region; the sequence is TPQERTTFRE…GKLGADLGAL (75 aa). The tract at residues 139 to 143 is flexible linker; it reads LAGAA. A domain III region spans residues 144-193; the sequence is SQSDHAADILNALVALGYSEKEGLAAIKNVPAGTGVSEGIKLALKALSKV.

The protein belongs to the RuvA family. In terms of assembly, homotetramer. Forms an RuvA(8)-RuvB(12)-Holliday junction (HJ) complex. HJ DNA is sandwiched between 2 RuvA tetramers; dsDNA enters through RuvA and exits via RuvB. An RuvB hexamer assembles on each DNA strand where it exits the tetramer. Each RuvB hexamer is contacted by two RuvA subunits (via domain III) on 2 adjacent RuvB subunits; this complex drives branch migration. In the full resolvosome a probable DNA-RuvA(4)-RuvB(12)-RuvC(2) complex forms which resolves the HJ.

The protein resides in the cytoplasm. Functionally, the RuvA-RuvB-RuvC complex processes Holliday junction (HJ) DNA during genetic recombination and DNA repair, while the RuvA-RuvB complex plays an important role in the rescue of blocked DNA replication forks via replication fork reversal (RFR). RuvA specifically binds to HJ cruciform DNA, conferring on it an open structure. The RuvB hexamer acts as an ATP-dependent pump, pulling dsDNA into and through the RuvAB complex. HJ branch migration allows RuvC to scan DNA until it finds its consensus sequence, where it cleaves and resolves the cruciform DNA. In Burkholderia ambifaria (strain ATCC BAA-244 / DSM 16087 / CCUG 44356 / LMG 19182 / AMMD) (Burkholderia cepacia (strain AMMD)), this protein is Holliday junction branch migration complex subunit RuvA.